The primary structure comprises 861 residues: Methyltransferase/ribosomally synthesized type III borosin cyclic peptide precursor aboMAa (861 aa).

The segment at 1–279 (MSSPAVETKV…AISTFYLPPK (279 aa)) is methyltransferase domain. Residues Arg-100, Tyr-104, and Tyr-126 contribute to the active site. Residues Tyr-126, His-128, Val-131, Ala-158, Gln-200, Ala-241, Ser-272, and Thr-273 each contribute to the S-adenosyl-L-methionine site. Residues 280–408 (ALSPLHEESA…GLVRSVMKTS (129 aa)) are clasp domain. The segment at 409 to 799 (PEDVAKQFVQ…PPDLEELPIP (391 aa)) is type III-specific C-terminal domain. Disordered stretches follow at residues 575–596 (NGAFPSGGGGGSGGGGGSSSQG) and 772–801 (EAAEKDSAVDDEKFADEEPPDLEELPIPDA). Residues 579–593 (PSGGGGGSGGGGGSS) show a composition bias toward gly residues. Positions 772-783 (EAAEKDSAVDDE) are enriched in basic and acidic residues. The segment covering 784–797 (KFADEEPPDLEELP) has biased composition (acidic residues). N-methylvaline occurs at positions 805 and 807. Repeat copies occupy residues 805 to 809 (VDVTD), 810 to 814 (VDVTD), 815 to 819 (VDVTD), 820 to 824 (VDVTD), 825 to 829 (VDVTD), 830 to 834 (VDVTD), 835 to 839 (VDVTD), 840 to 844 (VDVTD), and 845 to 849 (VDVTD). Positions 805–854 (VDVTDVDVTDVDVTDVDVTDVDVTDVDVTDVDVTDVDVTDVDVTDVDVVD) are 10 X 5 AA tandem repeats of VDVTD. Thr-808 carries the N-methylthreonine modification. Residues Val-810 and Val-812 each carry the N-methylvaline modification. Thr-813 is modified (N-methylthreonine). N-methylvaline is present on residues Val-815 and Val-817. Thr-818 carries the post-translational modification N-methylthreonine. N-methylvaline occurs at positions 820 and 822. N-methylthreonine is present on Thr-823. An N-methylvaline mark is found at Val-825 and Val-827. The residue at position 828 (Thr-828) is an N-methylthreonine. Val-830 and Val-832 each carry N-methylvaline. Thr-833 carries the N-methylthreonine modification. Residues 850–854 (VDVVD) form a 10; approximate repeat.

In the N-terminal section; belongs to the precorrin methyltransferase family. AboMA automethylates at Val-805, Val-807, Thr-808, Val-810, Val-812, Thr-813, Val-815, Val-817, Thr-818, Val-820, Val-822, Thr-823, Val-825, Val-827 and Thr-828, Val-830, Val-832 and T-833 before being processed by a prolyloligopeptidase which likely forms a peptidyl ester upon removal of the follower propeptide, which then undergoes macrocyclization with the N-terminus of the modified core peptide. Peptide backbone alpha-N-methylations change the physicochemical properties of amide bonds to provide structural constraints and other favorable characteristics including biological membrane permeability to peptides.

The protein operates within secondary metabolite biosynthesis. Its function is as follows. Fusion protein of the methyltransferase aboM and a type III borosin core peptide; part of the gene cluster that mediates the biosynthesis of a type III borosin, a highly methylated cyclic peptide with potent biological activities. Type III borosins derive from the C-terminus of the fusion protein, and it is the same protein that methylates its own C-terminus using S-adenosyl methionine (SAM). The C-terminus is subsequently cleaved off and macrocyclized by a prolyloligopeptidase to give the final product. The chain is Methyltransferase/ribosomally synthesized type III borosin cyclic peptide precursor aboMAa from Anomoporia bombycina (Polyporus bombycinus).